A 412-amino-acid chain; its full sequence is Alanyl-tRNA editing protein Aarsd1-B (412 aa).

Positions 108, 112, 208, and 212 each coordinate Zn(2+).

Belongs to the class-II aminoacyl-tRNA synthetase family. Alax-L subfamily. Zn(2+) serves as cofactor.

It localises to the cytoplasm. In terms of biological role, functions in trans to edit the amino acid moiety from incorrectly charged tRNA(Ala). The polypeptide is Alanyl-tRNA editing protein Aarsd1-B (aarsd1-b) (Xenopus laevis (African clawed frog)).